The chain runs to 356 residues: Chorismate synthase (356 aa).

Positions 48 and 54 each coordinate NADP(+). FMN is bound by residues arginine 125 to serine 127, asparagine 237 to alanine 238, glycine 281, lysine 296 to serine 300, and arginine 322.

The protein belongs to the chorismate synthase family. As to quaternary structure, homotetramer. It depends on FMNH2 as a cofactor.

The catalysed reaction is 5-O-(1-carboxyvinyl)-3-phosphoshikimate = chorismate + phosphate. It participates in metabolic intermediate biosynthesis; chorismate biosynthesis; chorismate from D-erythrose 4-phosphate and phosphoenolpyruvate: step 7/7. Functionally, catalyzes the anti-1,4-elimination of the C-3 phosphate and the C-6 proR hydrogen from 5-enolpyruvylshikimate-3-phosphate (EPSP) to yield chorismate, which is the branch point compound that serves as the starting substrate for the three terminal pathways of aromatic amino acid biosynthesis. This reaction introduces a second double bond into the aromatic ring system. The sequence is that of Chorismate synthase from Novosphingobium aromaticivorans (strain ATCC 700278 / DSM 12444 / CCUG 56034 / CIP 105152 / NBRC 16084 / F199).